The primary structure comprises 291 residues: Nucleotide-binding protein LMHCC_0126 (291 aa).

Residue 13–20 participates in ATP binding; sequence GMSGAGKT. 63 to 66 is a binding site for GTP; that stretch reads DLRG.

Belongs to the RapZ-like family.

Its function is as follows. Displays ATPase and GTPase activities. In Listeria monocytogenes serotype 4a (strain HCC23), this protein is Nucleotide-binding protein LMHCC_0126.